Here is a 180-residue protein sequence, read N- to C-terminus: Flavin prenyltransferase UbiX (180 aa).

Residues 9 to 11 (GAS), Ser-33, 84 to 87 (SITT), and Arg-119 each bind FMN. 2 residues coordinate dimethylallyl phosphate: Tyr-149 and Arg-165.

Belongs to the UbiX/PAD1 family.

The catalysed reaction is dimethylallyl phosphate + FMNH2 = prenylated FMNH2 + phosphate. Its function is as follows. Flavin prenyltransferase that catalyzes the synthesis of the prenylated FMN cofactor (prenyl-FMN) for 4-hydroxy-3-polyprenylbenzoic acid decarboxylase UbiD. The prenyltransferase is metal-independent and links a dimethylallyl moiety from dimethylallyl monophosphate (DMAP) to the flavin N5 and C6 atoms of FMN. In Thermoplasma acidophilum (strain ATCC 25905 / DSM 1728 / JCM 9062 / NBRC 15155 / AMRC-C165), this protein is Flavin prenyltransferase UbiX.